Reading from the N-terminus, the 208-residue chain is MVNKRIETLLAQLRQQGIEDERLLTAIEAVPRERFVDEAFEHKAYENTALPIGSGQTISQPYMVAKMTELLNLTPESRVLEIGTGSGYQTAILAHLVQHVCSVERIKGLQWQAKRRLKQLDLHNVSTRHGDGWQGWASRGPFDAIIVTAAPPEIPQALLEQLDEGGVMVLPVGEQSQILQVVQRHAGEFIIKTVEAVRFVPLVKGELA.

The active site involves Ser59.

It belongs to the methyltransferase superfamily. L-isoaspartyl/D-aspartyl protein methyltransferase family.

The protein localises to the cytoplasm. The catalysed reaction is [protein]-L-isoaspartate + S-adenosyl-L-methionine = [protein]-L-isoaspartate alpha-methyl ester + S-adenosyl-L-homocysteine. Functionally, catalyzes the methyl esterification of L-isoaspartyl residues in peptides and proteins that result from spontaneous decomposition of normal L-aspartyl and L-asparaginyl residues. It plays a role in the repair and/or degradation of damaged proteins. The sequence is that of Protein-L-isoaspartate O-methyltransferase from Pectobacterium atrosepticum (strain SCRI 1043 / ATCC BAA-672) (Erwinia carotovora subsp. atroseptica).